Consider the following 400-residue polypeptide: Enoyl-[acyl-carrier-protein] reductase [NADH] (400 aa).

Residues 48-53, 74-75, 111-112, and 139-140 each bind NAD(+); these read GASTGY, FE, DA, and LA. Residue Y225 participates in substrate binding. Y235 functions as the Proton donor in the catalytic mechanism. Residues K244 and 273–275 each bind NAD(+); that span reads VVT.

It belongs to the TER reductase family. In terms of assembly, monomer.

The catalysed reaction is a 2,3-saturated acyl-[ACP] + NAD(+) = a (2E)-enoyl-[ACP] + NADH + H(+). It functions in the pathway lipid metabolism; fatty acid biosynthesis. Functionally, involved in the final reduction of the elongation cycle of fatty acid synthesis (FAS II). Catalyzes the reduction of a carbon-carbon double bond in an enoyl moiety that is covalently linked to an acyl carrier protein (ACP). This is Enoyl-[acyl-carrier-protein] reductase [NADH] from Burkholderia cenocepacia (strain HI2424).